Here is a 206-residue protein sequence, read N- to C-terminus: Orotate phosphoribosyltransferase (206 aa).

5-phospho-alpha-D-ribose 1-diphosphate contacts are provided by residues Arg97, Lys98, Lys101, and Asn125 to Ser133. An orotate-binding site is contributed by Arg157.

This sequence belongs to the purine/pyrimidine phosphoribosyltransferase family. PyrE subfamily. In terms of assembly, homodimer. It depends on Mg(2+) as a cofactor.

The enzyme catalyses orotidine 5'-phosphate + diphosphate = orotate + 5-phospho-alpha-D-ribose 1-diphosphate. Its pathway is pyrimidine metabolism; UMP biosynthesis via de novo pathway; UMP from orotate: step 1/2. Catalyzes the transfer of a ribosyl phosphate group from 5-phosphoribose 1-diphosphate to orotate, leading to the formation of orotidine monophosphate (OMP). The polypeptide is Orotate phosphoribosyltransferase (Chlamydia felis (strain Fe/C-56) (Chlamydophila felis)).